The primary structure comprises 454 residues: Putative KilA-N domain-containing protein L4 (454 aa).

Residues 1-12 (MPQKTSKSKSSR) are compositionally biased toward basic residues. The segment at 1-159 (MPQKTSKSKS…DVPEEEYDDN (159 aa)) is disordered. Residues 14–64 (RYIEDSDDETRGRSRNRSIEKSRSRSLDKSQKKSRDKSLTRSRSKSPEKSK) are compositionally biased toward basic and acidic residues. Residues 65–79 (SRSKSLTRSRSKSPK) show a composition bias toward basic residues. Acidic residues-rich tracts occupy residues 98 to 123 (YTTEESDEESDDESDGETNEESDEEL) and 130 to 158 (ESDEEISEESDEEISEESDEDVPEEEYDD). The region spanning 172-276 (EFARGKFGDF…LKVSDIVIEY (105 aa)) is the KilA-N domain.

This chain is Putative KilA-N domain-containing protein L4, found in Acanthamoeba polyphaga mimivirus (APMV).